The sequence spans 687 residues: UvrABC system protein B (687 aa).

In terms of domain architecture, Helicase ATP-binding spans 26–414 (EGLAAGEMYQ…GAVIEQVVRP (389 aa)). 39–46 (GVTGSGKT) is a binding site for ATP. The short motif at 92 to 115 (YYDYYQPEAYVPASDTYIGKDASV) is the Beta-hairpin element. A Helicase C-terminal domain is found at 430 to 596 (QVDDLLSEIR…GIQKAVREII (167 aa)). The UVR domain occupies 630-665 (AKRLQQLERQMHKHAQNLEFEQAARLRDEIKRIKGW).

This sequence belongs to the UvrB family. In terms of assembly, forms a heterotetramer with UvrA during the search for lesions. Interacts with UvrC in an incision complex.

It is found in the cytoplasm. Its function is as follows. The UvrABC repair system catalyzes the recognition and processing of DNA lesions. A damage recognition complex composed of 2 UvrA and 2 UvrB subunits scans DNA for abnormalities. Upon binding of the UvrA(2)B(2) complex to a putative damaged site, the DNA wraps around one UvrB monomer. DNA wrap is dependent on ATP binding by UvrB and probably causes local melting of the DNA helix, facilitating insertion of UvrB beta-hairpin between the DNA strands. Then UvrB probes one DNA strand for the presence of a lesion. If a lesion is found the UvrA subunits dissociate and the UvrB-DNA preincision complex is formed. This complex is subsequently bound by UvrC and the second UvrB is released. If no lesion is found, the DNA wraps around the other UvrB subunit that will check the other stand for damage. This chain is UvrABC system protein B, found in Nitrosococcus oceani (strain ATCC 19707 / BCRC 17464 / JCM 30415 / NCIMB 11848 / C-107).